The sequence spans 870 residues: Aminopeptidase N (870 aa).

Substrate is bound by residues glutamate 121 and glycine 261–asparagine 265. Zn(2+) is bound at residue histidine 297. Glutamate 298 (proton acceptor) is an active-site residue. Positions 301 and 320 each coordinate Zn(2+).

The protein belongs to the peptidase M1 family. Requires Zn(2+) as cofactor.

The protein resides in the cell inner membrane. The catalysed reaction is Release of an N-terminal amino acid, Xaa-|-Yaa- from a peptide, amide or arylamide. Xaa is preferably Ala, but may be most amino acids including Pro (slow action). When a terminal hydrophobic residue is followed by a prolyl residue, the two may be released as an intact Xaa-Pro dipeptide.. Its function is as follows. Aminopeptidase N is involved in the degradation of intracellular peptides generated by protein breakdown during normal growth as well as in response to nutrient starvation. This is Aminopeptidase N (pepN) from Escherichia coli (strain K12).